Consider the following 314-residue polypeptide: MSSKANHAKTVICGIINVTPDSFSDGGQFFALEQALQQARKLIAEGASMLDIGGESTRPGSSYVEIEEEIQRVVPVIKAIRKESDVLISIDTWKSQVAEAALAAGADLVNDITGLMGDEKMAYVVAEARAKVVIMFNPVMARPQHPSSLIFPHFGFGQTFTEKELADFETLPIEDLMVAFFERALARAAEAGIAPENILLDPGIGFGLTKKENLLLLRDLDKLHQKGYPIFLGVSRKRFVINILEENGFEVNPETELGFRNRDTASAHVTSIAARQGVEVVRVHDVASHRMAVEIASAIRLADEAENLDLKQYK.

The Pterin-binding domain occupies 10–294 (TVICGIINVT…DVASHRMAVE (285 aa)). Asparagine 17 provides a ligand contact to Mg(2+). Residues threonine 57, aspartate 91, asparagine 110, aspartate 201, lysine 237, and 282 to 284 (RVH) each bind (7,8-dihydropterin-6-yl)methyl diphosphate.

It belongs to the DHPS family. As to quaternary structure, homodimer or homotrimer. Mg(2+) serves as cofactor.

It catalyses the reaction (7,8-dihydropterin-6-yl)methyl diphosphate + 4-aminobenzoate = 7,8-dihydropteroate + diphosphate. It functions in the pathway cofactor biosynthesis; tetrahydrofolate biosynthesis; 7,8-dihydrofolate from 2-amino-4-hydroxy-6-hydroxymethyl-7,8-dihydropteridine diphosphate and 4-aminobenzoate: step 1/2. Functionally, catalyzes the condensation of para-aminobenzoate (pABA) with 6-hydroxymethyl-7,8-dihydropterin diphosphate (DHPt-PP) to form 7,8-dihydropteroate (H2Pte), the immediate precursor of folate derivatives. In Streptococcus pneumoniae serotype 4 (strain ATCC BAA-334 / TIGR4), this protein is Dihydropteroate synthase (sulA).